A 449-amino-acid polypeptide reads, in one-letter code: 23S rRNA (uracil(1939)-C(5))-methyltransferase RlmD (449 aa).

The 66-residue stretch at Met-1–Glu-66 folds into the TRAM domain. Residues Cys-79, Cys-85, Cys-88, and Cys-169 each coordinate [4Fe-4S] cluster. Residues Gln-280, Phe-309, Asn-314, Glu-330, Asn-357, and Asp-379 each contribute to the S-adenosyl-L-methionine site. The active-site Nucleophile is Cys-405.

This sequence belongs to the class I-like SAM-binding methyltransferase superfamily. RNA M5U methyltransferase family. RlmD subfamily.

It catalyses the reaction uridine(1939) in 23S rRNA + S-adenosyl-L-methionine = 5-methyluridine(1939) in 23S rRNA + S-adenosyl-L-homocysteine + H(+). Functionally, catalyzes the formation of 5-methyl-uridine at position 1939 (m5U1939) in 23S rRNA. This chain is 23S rRNA (uracil(1939)-C(5))-methyltransferase RlmD, found in Francisella tularensis subsp. holarctica (strain LVS).